A 216-amino-acid chain; its full sequence is Cytidylate kinase (216 aa).

ATP is bound at residue 9–17 (GPAASGKGT).

This sequence belongs to the cytidylate kinase family. Type 1 subfamily.

It localises to the cytoplasm. The catalysed reaction is CMP + ATP = CDP + ADP. It catalyses the reaction dCMP + ATP = dCDP + ADP. In Caulobacter sp. (strain K31), this protein is Cytidylate kinase.